We begin with the raw amino-acid sequence, 354 residues long: Adenine deaminase (354 aa).

The Zn(2+) site is built by His20, His22, and His200. Glu203 acts as the Proton donor in catalysis. Residue Asp281 coordinates Zn(2+). Residue Asp282 participates in substrate binding.

Belongs to the metallo-dependent hydrolases superfamily. Adenosine and AMP deaminases family. Adenine deaminase type 2 subfamily. Zn(2+) is required as a cofactor.

The enzyme catalyses adenine + H2O + H(+) = hypoxanthine + NH4(+). In terms of biological role, catalyzes the hydrolytic deamination of adenine to hypoxanthine. Plays an important role in the purine salvage pathway and in nitrogen catabolism. This chain is Adenine deaminase, found in Cupriavidus metallidurans (strain ATCC 43123 / DSM 2839 / NBRC 102507 / CH34) (Ralstonia metallidurans).